The following is a 508-amino-acid chain: Hydroxymethylglutaryl-CoA synthase, mitochondrial (508 aa).

The N-terminal 37 residues, 1–37 (MQRLLTPVRQVLRVKRAMQEASFMPPLLPPAAHQRFS), are a transit peptide targeting the mitochondrion. The residue at position 52 (lysine 52) is an N6-succinyllysine. Positions 80 and 81 each coordinate (3S)-3-hydroxy-3-methylglutaryl-CoA. Catalysis depends on glutamate 132, which acts as the Proton donor/acceptor. Positions 166, 204, and 208 each coordinate (3S)-3-hydroxy-3-methylglutaryl-CoA. Cysteine 166 functions as the Acyl-thioester intermediate in the catalytic mechanism. At lysine 243 the chain carries N6-acetyllysine. N6-acetyllysine; alternate is present on lysine 256. At lysine 256 the chain carries N6-succinyllysine; alternate. (3S)-3-hydroxy-3-methylglutaryl-CoA-binding residues include serine 258 and histidine 301. Catalysis depends on histidine 301, which acts as the Proton donor/acceptor. N6-acetyllysine is present on lysine 306. Lysine 310 contributes to the (3S)-3-hydroxy-3-methylglutaryl-CoA binding site. At lysine 310 the chain carries N6-acetyllysine; alternate. Lysine 310 carries the post-translational modification N6-succinyllysine; alternate. At lysine 333 the chain carries N6-succinyllysine. N6-acetyllysine; alternate occurs at positions 342, 350, 354, and 358. 4 positions are modified to N6-succinyllysine; alternate: lysine 342, lysine 350, lysine 354, and lysine 358. (3S)-3-hydroxy-3-methylglutaryl-CoA-binding residues include asparagine 380 and serine 414. Serine 433 is modified (phosphoserine). N6-acetyllysine is present on lysine 437. Phosphoserine is present on residues serine 440 and serine 456. The residue at position 473 (lysine 473) is an N6-acetyllysine; alternate. Position 473 is an N6-succinyllysine; alternate (lysine 473).

It belongs to the thiolase-like superfamily. HMG-CoA synthase family. Homodimer. Succinylated. Desuccinylated by SIRT5. Succinylation, at least at Lys-310, inhibits the enzymatic activity.

It is found in the mitochondrion. The catalysed reaction is acetoacetyl-CoA + acetyl-CoA + H2O = (3S)-3-hydroxy-3-methylglutaryl-CoA + CoA + H(+). It functions in the pathway metabolic intermediate biosynthesis; (R)-mevalonate biosynthesis; (R)-mevalonate from acetyl-CoA: step 2/3. Its function is as follows. Catalyzes the first irreversible step in ketogenesis, condensing acetyl-CoA to acetoacetyl-CoA to form HMG-CoA, which is converted by HMG-CoA reductase (HMGCR) into mevalonate. The sequence is that of Hydroxymethylglutaryl-CoA synthase, mitochondrial (HMGCS2) from Sus scrofa (Pig).